The following is a 456-amino-acid chain: Adenylosuccinate lyase (456 aa).

Residues 15 to 16 (RY), 90 to 92 (NHD), and 122 to 123 (TS) each bind N(6)-(1,2-dicarboxyethyl)-AMP. His171 (proton donor/acceptor) is an active-site residue. N(6)-(1,2-dicarboxyethyl)-AMP is bound at residue Gln247. Ser295 (proton donor/acceptor) is an active-site residue. N(6)-(1,2-dicarboxyethyl)-AMP-binding positions include Ser296, 301–303 (KVN), Asn309, Arg335, and 340–344 (STVLR).

Belongs to the lyase 1 family. Adenylosuccinate lyase subfamily. In terms of assembly, homotetramer. Residues from neighboring subunits contribute catalytic and substrate-binding residues to each active site.

The catalysed reaction is N(6)-(1,2-dicarboxyethyl)-AMP = fumarate + AMP. The enzyme catalyses (2S)-2-[5-amino-1-(5-phospho-beta-D-ribosyl)imidazole-4-carboxamido]succinate = 5-amino-1-(5-phospho-beta-D-ribosyl)imidazole-4-carboxamide + fumarate. Its pathway is purine metabolism; AMP biosynthesis via de novo pathway; AMP from IMP: step 2/2. It functions in the pathway purine metabolism; IMP biosynthesis via de novo pathway; 5-amino-1-(5-phospho-D-ribosyl)imidazole-4-carboxamide from 5-amino-1-(5-phospho-D-ribosyl)imidazole-4-carboxylate: step 2/2. Catalyzes two reactions in de novo purine nucleotide biosynthesis. Catalyzes the breakdown of 5-aminoimidazole- (N-succinylocarboxamide) ribotide (SAICAR or 2-[5-amino-1-(5-phospho-beta-D-ribosyl)imidazole-4-carboxamido]succinate) to 5-aminoimidazole-4-carboxamide ribotide (AICAR or 5-amino-1-(5-phospho-beta-D-ribosyl)imidazole-4-carboxamide) and fumarate, and of adenylosuccinate (ADS or N(6)-(1,2-dicarboxyethyl)-AMP) to adenosine monophosphate (AMP) and fumarate. The chain is Adenylosuccinate lyase (purB) from Legionella pneumophila (strain Corby).